A 296-amino-acid chain; its full sequence is Meiotically up-regulated gene 2 protein (296 aa).

Belongs to the UPF0612 family.

It localises to the cytoplasm. The protein localises to the nucleus. In terms of biological role, has a role in meiosis. The protein is Meiotically up-regulated gene 2 protein (mug2) of Schizosaccharomyces pombe (strain 972 / ATCC 24843) (Fission yeast).